The following is a 21-amino-acid chain: Brevinin-1OKb (21 aa).

Lys-21 is subject to Lysine amide.

As to expression, expressed by the skin glands.

It localises to the secreted. Antimicrobial peptide. The chain is Brevinin-1OKb from Nidirana okinavana (Kampira Falls frog).